A 702-amino-acid chain; its full sequence is Ribosomal RNA large subunit methyltransferase K/L (702 aa).

The region spanning 43-154 is the THUMP domain; that stretch reads LVYQSLMWSR…KETASIALDL (112 aa).

The protein belongs to the methyltransferase superfamily. RlmKL family.

It localises to the cytoplasm. It catalyses the reaction guanosine(2445) in 23S rRNA + S-adenosyl-L-methionine = N(2)-methylguanosine(2445) in 23S rRNA + S-adenosyl-L-homocysteine + H(+). It carries out the reaction guanosine(2069) in 23S rRNA + S-adenosyl-L-methionine = N(2)-methylguanosine(2069) in 23S rRNA + S-adenosyl-L-homocysteine + H(+). Its function is as follows. Specifically methylates the guanine in position 2445 (m2G2445) and the guanine in position 2069 (m7G2069) of 23S rRNA. In Escherichia coli O1:K1 / APEC, this protein is Ribosomal RNA large subunit methyltransferase K/L.